Here is a 441-residue protein sequence, read N- to C-terminus: Xaa-Pro aminopeptidase (441 aa).

Residues Asp261, Asp272, His355, Glu384, and Glu407 each contribute to the Mn(2+) site.

The protein belongs to the peptidase M24B family. As to quaternary structure, homotetramer. It depends on Mn(2+) as a cofactor.

The protein resides in the cytoplasm. It catalyses the reaction Release of any N-terminal amino acid, including proline, that is linked to proline, even from a dipeptide or tripeptide.. This Escherichia coli (strain K12) protein is Xaa-Pro aminopeptidase (pepP).